We begin with the raw amino-acid sequence, 700 residues long: Beta-galactosidase Bga (700 aa).

Arg103 contacts substrate. Residue Cys107 participates in Zn(2+) binding. Asn141 is a substrate binding site. Residue Glu142 is the Proton donor of the active site. 3 residues coordinate Zn(2+): Cys151, Cys153, and Cys156. The active-site Nucleophile is Glu312. Residues Trp320 and 360–363 (EQYH) contribute to the substrate site. The span at 648-658 (DPESLAVDDTD) shows a compositional bias: acidic residues. A disordered region spans residues 648-674 (DPESLAVDDTDRDGFDPMADDDKDSSA).

Belongs to the glycosyl hydrolase 42 family.

It carries out the reaction Hydrolysis of terminal non-reducing beta-D-galactose residues in beta-D-galactosides.. Requires 4 M NaCl or KCl for maximal activity. Its function is as follows. Cleaves o-nitrophenyl-beta-D-galactopyranoside (ONPG) in vitro. The protein is Beta-galactosidase Bga of Halorubrum lacusprofundi (strain ATCC 49239 / DSM 5036 / JCM 8891 / ACAM 34).